The sequence spans 156 residues: Small ribosomal subunit protein uS7 (156 aa).

It belongs to the universal ribosomal protein uS7 family. Part of the 30S ribosomal subunit. Contacts proteins S9 and S11.

Its function is as follows. One of the primary rRNA binding proteins, it binds directly to 16S rRNA where it nucleates assembly of the head domain of the 30S subunit. Is located at the subunit interface close to the decoding center, probably blocks exit of the E-site tRNA. The polypeptide is Small ribosomal subunit protein uS7 (Mycobacterium bovis (strain ATCC BAA-935 / AF2122/97)).